The sequence spans 532 residues: Putative F-box/LRR-repeat protein At3g42770 (532 aa).

Positions 1–46 (MNCLPDELLVQILSFLPTKEATSTSLLSKRWRTLFTLSPNLDFDNS) constitute an F-box domain. LRR repeat units lie at residues 113–135 (VSELHLRIDYTKRCHLPSEIFTS), 279–305 (IRNVKTLHLTSSTVKVILLCCKGEIPM), and 398–420 (MNDLKKMQLTEDLLKLPKASPKL).

The protein is Putative F-box/LRR-repeat protein At3g42770 of Arabidopsis thaliana (Mouse-ear cress).